A 393-amino-acid chain; its full sequence is Proteasome-activating nucleotidase (393 aa).

A coiled-coil region spans residues 14 to 53 (SDEVQLVRLLEEKIKSLQIEIENLRKELNYYKAEMEKMLS). ATP-binding positions include 178-183 (GTGKTM) and Tyr317. Positions 391–393 (KYS) are docks into pockets in the proteasome alpha-ring to cause gate opening.

This sequence belongs to the AAA ATPase family. Homohexamer. The hexameric complex has a two-ring architecture resembling a top hat that caps the 20S proteasome core at one or both ends. Upon ATP-binding, the C-terminus of PAN interacts with the alpha-rings of the proteasome core by binding to the intersubunit pockets.

It localises to the cytoplasm. Its function is as follows. ATPase which is responsible for recognizing, binding, unfolding and translocation of substrate proteins into the archaeal 20S proteasome core particle. Is essential for opening the gate of the 20S proteasome via an interaction with its C-terminus, thereby allowing substrate entry and access to the site of proteolysis. Thus, the C-termini of the proteasomal ATPase function like a 'key in a lock' to induce gate opening and therefore regulate proteolysis. Unfolding activity requires energy from ATP hydrolysis, whereas ATP binding alone promotes ATPase-20S proteasome association which triggers gate opening, and supports translocation of unfolded substrates. The protein is Proteasome-activating nucleotidase of Saccharolobus islandicus (strain M.16.27) (Sulfolobus islandicus).